Consider the following 164-residue polypeptide: D-aminoacyl-tRNA deacylase (164 aa).

Residues tryptophan 72 and phenylalanine 89 each contribute to the tRNA site. Threonine 90 functions as the Nucleophile in the catalytic mechanism. The C-terminal adenosine nucleotide of tRNA motif lies at 104–107; that stretch reads HLAK. The Gly-cisPro motif, allows the protein to recognize chirality of D-amino acids signature appears at 149–150; the sequence is GP.

It belongs to the DTD family. In terms of assembly, homodimer.

Its subcellular location is the cytoplasm. It carries out the reaction glycyl-tRNA(Ala) + H2O = tRNA(Ala) + glycine + H(+). It catalyses the reaction a D-aminoacyl-tRNA + H2O = a tRNA + a D-alpha-amino acid + H(+). The enzyme catalyses D-tyrosyl-tRNA(Tyr) + H2O = D-tyrosine + tRNA(Tyr). D-aminoacyl-tRNA deacylase, with no observable activity on tRNAs charged with their cognate L-amino acid. Probably acts by rejecting L-amino acids from its binding site rather than specific recognition of D-amino acids. Catalyzes the hydrolysis of D-tyrosyl-tRNA(Tyr), has no activity on correctly charged L-tyrosyl-tRNA(Tyr). Hydrolyzes correctly charged, achiral, glycyl-tRNA(Gly). Deacylates mischarged D.melanogaster and E.coli glycyl-tRNA(Ala). Probably acts via tRNA-based rather than protein-based catalysis. Acts on tRNAs only when the D-amino acid is either attached to the ribose 3'-OH or transferred to the 3'-OH from the 2'-OH through rapid transesterification. Binds a number of other D-amino acids (D-Arg, D-Glu, D-His, D-Lys, D-Ser), suggesting it may also deacylate other mischarged tRNAs. The chain is D-aminoacyl-tRNA deacylase from Plasmodium falciparum (isolate 3D7).